Reading from the N-terminus, the 134-residue chain is Small ribosomal subunit protein uS11 (134 aa).

The protein belongs to the universal ribosomal protein uS11 family. Part of the 30S ribosomal subunit. Interacts with proteins S7 and S18. Binds to IF-3.

Its function is as follows. Located on the platform of the 30S subunit, it bridges several disparate RNA helices of the 16S rRNA. Forms part of the Shine-Dalgarno cleft in the 70S ribosome. The protein is Small ribosomal subunit protein uS11 of Janthinobacterium sp. (strain Marseille) (Minibacterium massiliensis).